Reading from the N-terminus, the 153-residue chain is MSSGLTGPQKAALKSSWSRFMDNAVTNGTNFYMDLFKAYPDTLTPFKSLFEDVSFNQMTDHPTMKAQALVFCDGMSSFVDNLDDHEVLVVLLQKMAKLHFNRGIRIKELRDGYGVLLRYLEDHCHVEGSTKNAWEDFIAYICRVQGDFMKERL.

N-acetylserine is present on Ser2. The Globin domain occupies 4–150; the sequence is GLTGPQKAAL…ICRVQGDFMK (147 aa). Residue His99 participates in heme b binding.

The protein belongs to the globin family. In terms of assembly, homotetramer.

The protein localises to the cytoplasm. The sequence is that of Hemoglobin-3 from Phacoides pectinatus (Thick lucine).